The sequence spans 144 residues: Large ribosomal subunit protein uL15 (144 aa).

A disordered region spans residues 1 to 56 (MELNNLKPAAGAKHAKRRVGRGIGSGLGKTAGRGHKGQKSRSGGFHKVGFEGGQMP). Gly residues predominate over residues 21-31 (RGIGSGLGKTA).

This sequence belongs to the universal ribosomal protein uL15 family. In terms of assembly, part of the 50S ribosomal subunit.

In terms of biological role, binds to the 23S rRNA. This chain is Large ribosomal subunit protein uL15, found in Burkholderia ambifaria (strain MC40-6).